A 503-amino-acid chain; its full sequence is Trehalose-6-phosphate synthase (503 aa).

Arg-22 is a binding site for D-glucose 6-phosphate. A UDP-alpha-D-glucose-binding site is contributed by 42-43; the sequence is GG. Residues Tyr-94 and Asp-148 each coordinate D-glucose 6-phosphate. UDP-alpha-D-glucose-binding residues include Arg-290 and Lys-295. A D-glucose 6-phosphate-binding site is contributed by Arg-328. 393–397 is a binding site for UDP-alpha-D-glucose; the sequence is LVAKE. A disordered region spans residues 481–503; that stretch reads GETGDSGVTGESTPAPESDSGSF.

This sequence belongs to the glycosyltransferase 20 family. In terms of assembly, homotetramer.

The catalysed reaction is ADP-alpha-D-glucose + D-glucose 6-phosphate = alpha,alpha-trehalose 6-phosphate + ADP + H(+). The enzyme catalyses CDP-alpha-D-glucose + D-glucose 6-phosphate = alpha,alpha-trehalose 6-phosphate + CDP + H(+). It carries out the reaction GDP-alpha-D-glucose + D-glucose 6-phosphate = alpha,alpha-trehalose 6-phosphate + GDP + H(+). It catalyses the reaction TDP-alpha-D-glucose + D-glucose 6-phosphate = 5-methyl-UDP + alpha,alpha-trehalose 6-phosphate + H(+). The catalysed reaction is D-glucose 6-phosphate + UDP-alpha-D-glucose = alpha,alpha-trehalose 6-phosphate + UDP + H(+). The protein operates within glycan biosynthesis; trehalose biosynthesis. With respect to regulation, stimulated by the polynucleotide FII (physiological activator), and by chondroitin sulfate (CS) and heparin. Activation by the polyanion is inhibited by high salt concentration as well as by high concentrations of mononucleoside phosphates. In terms of biological role, involved in the production of glycogen and alpha-glucan via the TreS-Pep2 branch involved in the biosynthesis of maltose-1-phosphate (M1P), and probably in the osmoprotection via the biosynthesis of trehalose. Catalyzes the transfer of glucose from UDP-glucose (UDP-Glc) to glucose-6-phosphate (Glc-6-P) to form trehalose-6-phosphate. ADP-Glc, CDP-Glc, GDP-Glc and TDP-Glc are also glucosyl donors, however, when the pyrimidine sugar nucleotides (CDP-Glc, TDP-Glc and UDP-Glc) are used as substrates, there is an absolute requirement for a high molecular weight polyanion for activity. The protein is Trehalose-6-phosphate synthase of Mycolicibacterium smegmatis (strain ATCC 700084 / mc(2)155) (Mycobacterium smegmatis).